Consider the following 469-residue polypeptide: Ribulose bisphosphate carboxylase large chain (469 aa).

A propeptide spanning residues 1–2 is cleaved from the precursor; it reads MS. At proline 3 the chain carries N-acetylproline. Lysine 14 is modified (N6,N6,N6-trimethyllysine). Residues asparagine 123 and threonine 173 each coordinate substrate. Lysine 175 (proton acceptor) is an active-site residue. A substrate-binding site is contributed by lysine 177. The Mg(2+) site is built by lysine 201, aspartate 203, and glutamate 204. Residue lysine 201 is modified to N6-carboxylysine. Histidine 294 acts as the Proton acceptor in catalysis. Residues arginine 295, histidine 327, and serine 379 each contribute to the substrate site.

The protein belongs to the RuBisCO large chain family. Type I subfamily. As to quaternary structure, heterohexadecamer of 8 large chains and 8 small chains; disulfide-linked. The disulfide link is formed within the large subunit homodimers. Mg(2+) serves as cofactor. Post-translationally, the disulfide bond which can form in the large chain dimeric partners within the hexadecamer appears to be associated with oxidative stress and protein turnover.

It is found in the plastid. Its subcellular location is the chloroplast. The catalysed reaction is 2 (2R)-3-phosphoglycerate + 2 H(+) = D-ribulose 1,5-bisphosphate + CO2 + H2O. The enzyme catalyses D-ribulose 1,5-bisphosphate + O2 = 2-phosphoglycolate + (2R)-3-phosphoglycerate + 2 H(+). Functionally, ruBisCO catalyzes two reactions: the carboxylation of D-ribulose 1,5-bisphosphate, the primary event in carbon dioxide fixation, as well as the oxidative fragmentation of the pentose substrate in the photorespiration process. Both reactions occur simultaneously and in competition at the same active site. This is Ribulose bisphosphate carboxylase large chain from Dianthus caryophyllus (Carnation).